A 704-amino-acid chain; its full sequence is Elongation factor G 1 (704 aa).

The tr-type G domain maps to 8–291 (ERYRNIGISA…AVIDYLPSPA (284 aa)). Residues 17–24 (AHIDAGKT), 88–92 (DTPGH), and 142–145 (NKMD) each bind GTP.

It belongs to the TRAFAC class translation factor GTPase superfamily. Classic translation factor GTPase family. EF-G/EF-2 subfamily.

The protein resides in the cytoplasm. Its function is as follows. Catalyzes the GTP-dependent ribosomal translocation step during translation elongation. During this step, the ribosome changes from the pre-translocational (PRE) to the post-translocational (POST) state as the newly formed A-site-bound peptidyl-tRNA and P-site-bound deacylated tRNA move to the P and E sites, respectively. Catalyzes the coordinated movement of the two tRNA molecules, the mRNA and conformational changes in the ribosome. In Burkholderia pseudomallei (strain 1710b), this protein is Elongation factor G 1.